We begin with the raw amino-acid sequence, 245 residues long: Large ribosomal subunit protein uL29m (245 aa).

2 stretches are compositionally biased toward low complexity: residues 36–49 and 234–245; these read SFNSQRSQFSTSSS and STKSETTTSKNI. Disordered regions lie at residues 36–98 and 207–245; these read SFNS…NPDH and RPSPDEVLEEETETAMPTEVMPEELDSSTKSETTTSKNI.

This sequence belongs to the universal ribosomal protein uL29 family. Component of the mitochondrial large ribosomal subunit. Mature mitochondrial ribosomes consist of a small (37S) and a large (54S) subunit. The 37S subunit contains at least 33 different proteins and 1 molecule of RNA (15S). The 54S subunit contains at least 45 different proteins and 1 molecule of RNA (21S).

Its subcellular location is the mitochondrion. This is Large ribosomal subunit protein uL29m (MRPL4) from Coccidioides immitis (strain RS) (Valley fever fungus).